Reading from the N-terminus, the 431-residue chain is MANSC domain-containing protein 1 (431 aa).

The N-terminal stretch at 1–26 is a signal peptide; it reads MFFGGKGSLTYTLVIICFLTLRLAAS. Topologically, residues 27-385 are extracellular; it reads QNCLNKSLED…QYGLPFEKWL (359 aa). N-linked (GlcNAc...) asparagine glycosylation is present at N31. Residues 33–117 form the MANSC domain; the sequence is SLEDVVIDIQ…LKPAKGLRSY (85 aa). 2 N-linked (GlcNAc...) asparagine glycosylation sites follow: N222 and N251. Residues 236–279 are disordered; the sequence is HTTSATPKPAIRLPTNASVTPSGTSQPQLATTSPPVTTVTSQPP. A compositionally biased stretch (polar residues) spans 250–265; the sequence is TNASVTPSGTSQPQLA. Low complexity predominate over residues 266 to 279; sequence TTSPPVTTVTSQPP. N327 and N352 each carry an N-linked (GlcNAc...) asparagine glycan. The disordered stretch occupies residues 352–372; sequence NKTASWEGREASPGRSSQGNV. A helical membrane pass occupies residues 386–408; sequence LIGSLLFGVLFLVIGLVLLGRIL. The Cytoplasmic portion of the chain corresponds to 409–431; sequence SESLRRKRYSRLDYLINGIYVDI.

It is found in the membrane. This is MANSC domain-containing protein 1 (MANSC1) from Macaca fascicularis (Crab-eating macaque).